A 382-amino-acid chain; its full sequence is D-galactonate dehydratase (382 aa).

Mg(2+) is bound at residue Asp183. The active-site Proton donor is the His185. Residues Glu209 and Glu235 each contribute to the Mg(2+) site. His285 (proton acceptor) is an active-site residue.

This sequence belongs to the mandelate racemase/muconate lactonizing enzyme family. GalD subfamily. It depends on Mg(2+) as a cofactor.

It catalyses the reaction D-galactonate = 2-dehydro-3-deoxy-D-galactonate + H2O. The protein operates within carbohydrate acid metabolism; D-galactonate degradation; D-glyceraldehyde 3-phosphate and pyruvate from D-galactonate: step 1/3. Its function is as follows. Catalyzes the dehydration of D-galactonate to 2-keto-3-deoxy-D-galactonate. The protein is D-galactonate dehydratase of Ralstonia nicotianae (strain ATCC BAA-1114 / GMI1000) (Ralstonia solanacearum).